Consider the following 882-residue polypeptide: Nitrogen regulatory protein areA (882 aa).

Positions 1–13 are enriched in gly residues; sequence MSGLTLGGGGSGG. Disordered stretches follow at residues 1–75, 139–191, 228–257, 325–344, 394–422, 461–545, and 579–675; these read MSGL…PDSL, KRKE…LTSD, SRKDQVAESTPVPASFPHPPQDQRKNSEFG, NNHSSSHHNHTSPGMPFGLD, STDFFSPPQSGYQSTASTPQPAYDGEHSM, NQDQ…DMNG, and MDTP…GPTT. Over residues 48 to 59 the composition is skewed to low complexity; it reads SDFSQLSDDFSF. Polar residues-rich tracts occupy residues 156–169 and 177–191; these read NSVSGPSGIAQLTS and PTRQNPSLSTDLTSD. A compositionally biased stretch (basic residues) spans 325–334; that stretch reads NNHSSSHHNH. 2 stretches are compositionally biased toward polar residues: residues 394–413 and 492–503; these read STDFFSPPQSGYQSTASTPQ and QVLNPNDFSTGA. The segment covering 604–613 has biased composition (basic and acidic residues); the sequence is VRNREQDPRR. Polar residues predominate over residues 617–642; that stretch reads ARTTSTPNTAQLLRQSMNANTSHTSP. The GATA-type zinc-finger motif lies at 676–700; the sequence is CTNCFTQTTPLWRRNPEGQPLCNAC. The disordered stretch occupies residues 723-871; it reads RNRSSANSLA…NHSIAGGQGA (149 aa). Low complexity predominate over residues 745–759; that stretch reads KNSVQQTTVTTPTSS. Residues 795–811 show a composition bias toward polar residues; the sequence is NPTTSSPGQSRGTSSVQ. Residues 848 to 861 show a composition bias toward low complexity; it reads ALAPAMPPAAANPA.

It is found in the nucleus. In terms of biological role, major nitrogen regulatory protein. Positively acting regulatory gene of nitrogen metabolite repression. The chain is Nitrogen regulatory protein areA (areA) from Aspergillus niger.